The primary structure comprises 116 residues: MACPGFLWALVISTCLEFSMAQTVTQSQPEMSVQEAETVTLSCTYDTSESDYYLFWYKQPPSRQMILVIRQEAYKQQNATENRFSVNFQKAAKSFSLKISDSQLGDAAMYFCAYRS.

The first 21 residues, methionine 1–alanine 21, serve as a signal peptide directing secretion. One can recognise an Ig-like domain in the interval glutamine 22–serine 116. A disulfide bridge connects residues cysteine 43 and cysteine 112. N-linked (GlcNAc...) asparagine glycosylation occurs at asparagine 78.

In terms of assembly, alpha-beta TR is a heterodimer composed of an alpha and beta chain; disulfide-linked. The alpha-beta TR is associated with the transmembrane signaling CD3 coreceptor proteins to form the TR-CD3 (TcR or TCR). The assembly of alpha-beta TR heterodimers with CD3 occurs in the endoplasmic reticulum where a single alpha-beta TR heterodimer associates with one CD3D-CD3E heterodimer, one CD3G-CD3E heterodimer and one CD247 homodimer forming a stable octameric structure. CD3D-CD3E and CD3G-CD3E heterodimers preferentially associate with TR alpha and TR beta chains, respectively. The association of the CD247 homodimer is the last step of TcR assembly in the endoplasmic reticulum and is required for transport to the cell surface.

It is found in the cell membrane. Functionally, v region of the variable domain of T cell receptor (TR) alpha chain that participates in the antigen recognition. Alpha-beta T cell receptors are antigen specific receptors which are essential to the immune response and are present on the cell surface of T lymphocytes. Recognize peptide-major histocompatibility (MH) (pMH) complexes that are displayed by antigen presenting cells (APC), a prerequisite for efficient T cell adaptive immunity against pathogens. Binding of alpha-beta TR to pMH complex initiates TR-CD3 clustering on the cell surface and intracellular activation of LCK that phosphorylates the ITAM motifs of CD3G, CD3D, CD3E and CD247 enabling the recruitment of ZAP70. In turn ZAP70 phosphorylates LAT, which recruits numerous signaling molecules to form the LAT signalosome. The LAT signalosome propagates signal branching to three major signaling pathways, the calcium, the mitogen-activated protein kinase (MAPK) kinase and the nuclear factor NF-kappa-B (NF-kB) pathways, leading to the mobilization of transcription factors that are critical for gene expression and essential for T cell growth and differentiation. The T cell repertoire is generated in the thymus, by V-(D)-J rearrangement. This repertoire is then shaped by intrathymic selection events to generate a peripheral T cell pool of self-MH restricted, non-autoaggressive T cells. Post-thymic interaction of alpha-beta TR with the pMH complexes shapes TR structural and functional avidity. This is T cell receptor alpha variable 38-2/delta variable 8 from Homo sapiens (Human).